The chain runs to 414 residues: Esterase FrsA (414 aa).

Belongs to the FrsA family.

It carries out the reaction a carboxylic ester + H2O = an alcohol + a carboxylate + H(+). Functionally, catalyzes the hydrolysis of esters. This is Esterase FrsA from Salmonella typhi.